The sequence spans 161 residues: Heme transporter hrg-6 (161 aa).

Transmembrane regions (helical) follow at residues 13 to 33, 38 to 58, 75 to 95, and 115 to 135; these read IAYT…YIFA, VALA…YFYL, VLFW…ITAI, and WWST…NAFI.

It belongs to the HRG family.

It localises to the membrane. Heme transporter. This Caenorhabditis elegans protein is Heme transporter hrg-6 (hrg-6).